The following is a 219-amino-acid chain: 7-cyano-7-deazaguanine synthase (219 aa).

An ATP-binding site is contributed by 10 to 20; it reads FSGGQDSTTCL. The Zn(2+) site is built by Cys188, Cys197, Cys200, and Cys203.

The protein belongs to the QueC family. Zn(2+) is required as a cofactor.

The catalysed reaction is 7-carboxy-7-deazaguanine + NH4(+) + ATP = 7-cyano-7-deazaguanine + ADP + phosphate + H2O + H(+). It functions in the pathway purine metabolism; 7-cyano-7-deazaguanine biosynthesis. Its function is as follows. Catalyzes the ATP-dependent conversion of 7-carboxy-7-deazaguanine (CDG) to 7-cyano-7-deazaguanine (preQ(0)). The protein is 7-cyano-7-deazaguanine synthase of Bacteroides fragilis (strain ATCC 25285 / DSM 2151 / CCUG 4856 / JCM 11019 / LMG 10263 / NCTC 9343 / Onslow / VPI 2553 / EN-2).